Reading from the N-terminus, the 251-residue chain is Small ribosomal subunit protein uS2 (251 aa).

This sequence belongs to the universal ribosomal protein uS2 family.

This Cereibacter sphaeroides (strain ATCC 17029 / ATH 2.4.9) (Rhodobacter sphaeroides) protein is Small ribosomal subunit protein uS2.